The primary structure comprises 970 residues: Translation initiation factor IF-2 (970 aa).

Disordered regions lie at residues 54-270 (KILA…TATQ) and 328-348 (DKRR…KSLS). Over residues 87–96 (QEAQPVEAQP) the composition is skewed to low complexity. The segment covering 98–112 (YEEQPSYEEQPSYEE) has biased composition (polar residues). The span at 121-149 (EVAAEAAPEPVEEPASSPEGGAPAGGAEP) shows a compositional bias: low complexity. 2 stretches are compositionally biased toward pro residues: residues 150-160 (QPAPEAPPPSA) and 168-182 (PSAP…PAPS). A compositionally biased stretch (low complexity) spans 183–253 (VPAGAQPPGA…PHGPGAQPGQ (71 aa)). The tr-type G domain occupies 469–638 (IRPPVVTVMG…ALQSEVLELK (170 aa)). The interval 478–485 (GHVDHGKT) is G1. 478 to 485 (GHVDHGKT) contacts GTP. The segment at 503-507 (GITQH) is G2. The segment at 524-527 (DTPG) is G3. GTP contacts are provided by residues 524–528 (DTPGH) and 578–581 (NKID). The interval 578–581 (NKID) is G4. Residues 614–616 (SAR) form a G5 region.

This sequence belongs to the TRAFAC class translation factor GTPase superfamily. Classic translation factor GTPase family. IF-2 subfamily.

Its subcellular location is the cytoplasm. Functionally, one of the essential components for the initiation of protein synthesis. Protects formylmethionyl-tRNA from spontaneous hydrolysis and promotes its binding to the 30S ribosomal subunits. Also involved in the hydrolysis of GTP during the formation of the 70S ribosomal complex. The chain is Translation initiation factor IF-2 from Anaeromyxobacter sp. (strain Fw109-5).